Here is a 387-residue protein sequence, read N- to C-terminus: Structural protein ORF387 (387 aa).

Residues Lys315–Ser387 adopt a coiled-coil conformation. The segment at Leu365–Ser387 is disordered.

It localises to the virion. In Acidianus convivator (ATV), this protein is Structural protein ORF387.